A 233-amino-acid polypeptide reads, in one-letter code: Transcriptional regulatory protein PrrA (233 aa).

The 115-residue stretch at 9–123 folds into the Response regulatory domain; that stretch reads RVLVVDDDSD…ELVARVKALL (115 aa). At Asp58 the chain carries 4-aspartylphosphate. The ompR/PhoB-type DNA-binding region spans 134–232; that stretch reads SETIAVGPLE…VRGVGFVLRM (99 aa).

Post-translationally, phosphorylated by PrrB at Asp-58.

Its subcellular location is the cytoplasm. Its function is as follows. Member of the two-component regulatory system PrrB/PrrA that is involved specifically in early intracellular multiplication of Mycobacterium and is essential for its viability. Upon phosphorylation by PrrB, functions as a transcription regulator by direct binding to promoter regions of target genes to positively regulate their expression. Autoregulates its own expression. This chain is Transcriptional regulatory protein PrrA (prrA), found in Mycobacterium leprae (strain TN).